Here is a 495-residue protein sequence, read N- to C-terminus: Amidophosphoribosyltransferase (495 aa).

Residues 1–22 (MFPPSSDLTELNDGQPLSGHHA) form a disordered region. A propeptide spanning residues 1 to 28 (MFPPSSDLTELNDGQPLSGHHADKPEEA) is cleaved from the precursor. Cysteine 29 functions as the Nucleophile in the catalytic mechanism. The 226-residue stretch at 29–254 (CGVFGIYAPE…AGELVHITES (226 aa)) folds into the Glutamine amidotransferase type-2 domain. Cysteine 270 serves as a coordination point for [4Fe-4S] cluster. 3 residues coordinate Mg(2+): serine 317, aspartate 379, and aspartate 380. Cysteine 416, cysteine 467, and cysteine 470 together coordinate [4Fe-4S] cluster.

It in the C-terminal section; belongs to the purine/pyrimidine phosphoribosyltransferase family. It depends on Mg(2+) as a cofactor. The cofactor is [4Fe-4S] cluster.

The catalysed reaction is 5-phospho-beta-D-ribosylamine + L-glutamate + diphosphate = 5-phospho-alpha-D-ribose 1-diphosphate + L-glutamine + H2O. It functions in the pathway purine metabolism; IMP biosynthesis via de novo pathway; N(1)-(5-phospho-D-ribosyl)glycinamide from 5-phospho-alpha-D-ribose 1-diphosphate: step 1/2. In terms of biological role, catalyzes the formation of phosphoribosylamine from phosphoribosylpyrophosphate (PRPP) and glutamine. The protein is Amidophosphoribosyltransferase of Synechocystis sp. (strain ATCC 27184 / PCC 6803 / Kazusa).